Reading from the N-terminus, the 241-residue chain is Carboxy-S-adenosyl-L-methionine synthase (241 aa).

S-adenosyl-L-methionine contacts are provided by residues Y38, G63–S65, D88–N89, D116–I117, N131, and R198.

Belongs to the class I-like SAM-binding methyltransferase superfamily. Cx-SAM synthase family. In terms of assembly, homodimer.

It carries out the reaction prephenate + S-adenosyl-L-methionine = carboxy-S-adenosyl-L-methionine + 3-phenylpyruvate + H2O. Its function is as follows. Catalyzes the conversion of S-adenosyl-L-methionine (SAM) to carboxy-S-adenosyl-L-methionine (Cx-SAM). The chain is Carboxy-S-adenosyl-L-methionine synthase from Actinobacillus pleuropneumoniae serotype 7 (strain AP76).